The sequence spans 178 residues: Large ribosomal subunit protein uL6 (178 aa).

Belongs to the universal ribosomal protein uL6 family. In terms of assembly, part of the 50S ribosomal subunit.

In terms of biological role, this protein binds to the 23S rRNA, and is important in its secondary structure. It is located near the subunit interface in the base of the L7/L12 stalk, and near the tRNA binding site of the peptidyltransferase center. This chain is Large ribosomal subunit protein uL6, found in Lactiplantibacillus plantarum (strain ATCC BAA-793 / NCIMB 8826 / WCFS1) (Lactobacillus plantarum).